The following is a 498-amino-acid chain: 3-octaprenyl-4-hydroxybenzoate carboxy-lyase (498 aa).

Asn-175 is a Mn(2+) binding site. Prenylated FMN contacts are provided by residues 178 to 180 (IYR), 192 to 194 (RWL), and 197 to 198 (RG). Glu-241 contacts Mn(2+). Asp-290 functions as the Proton donor in the catalytic mechanism.

Belongs to the UbiD family. In terms of assembly, homohexamer. The cofactor is prenylated FMN. Mn(2+) serves as cofactor.

It is found in the cell membrane. It carries out the reaction a 4-hydroxy-3-(all-trans-polyprenyl)benzoate + H(+) = a 2-(all-trans-polyprenyl)phenol + CO2. Its pathway is cofactor biosynthesis; ubiquinone biosynthesis. Catalyzes the decarboxylation of 3-octaprenyl-4-hydroxy benzoate to 2-octaprenylphenol, an intermediate step in ubiquinone biosynthesis. The chain is 3-octaprenyl-4-hydroxybenzoate carboxy-lyase from Pectobacterium atrosepticum (strain SCRI 1043 / ATCC BAA-672) (Erwinia carotovora subsp. atroseptica).